We begin with the raw amino-acid sequence, 154 residues long: MFDILVYLFENYLHAAACPESEQLARKLSAAGFEEDEITEALDWLSGLRAIAVSPLAKVPQPDSIRLYAAEEQAKLDTSCRGFLAFLENAGALDPQTRELIIERTMAVDGFHVNLHRFKVIVLMVLWQQEQPLDSLILDELLTDEAEELAPVLQ.

Belongs to the Smg family.

This Aromatoleum aromaticum (strain DSM 19018 / LMG 30748 / EbN1) (Azoarcus sp. (strain EbN1)) protein is Protein Smg homolog.